A 143-amino-acid polypeptide reads, in one-letter code: Mini-ribonuclease 3 (143 aa).

D23 is a catalytic residue.

This sequence belongs to the MrnC RNase family. In terms of assembly, homodimer. Mg(2+) is required as a cofactor.

It localises to the cytoplasm. Involved in correct processing of both the 5' and 3' ends of 23S rRNA precursor. Processes 30S rRNA precursor transcript even in absence of ribonuclease 3 (Rnc); Rnc processes 30S rRNA into smaller rRNA precursors. Cleaves more efficiently on assembled 50S ribosomal subunits. Cleavage is strongly stimulated by ribosomal protein L3 (RplC); 20-30% DMSO can replace RplC, suggesting RplC may alter rRNA conformation. This Bacillus subtilis (strain 168) protein is Mini-ribonuclease 3 (mrnC).